Here is a 502-residue protein sequence, read N- to C-terminus: Aspartyl/glutamyl-tRNA(Asn/Gln) amidotransferase subunit B (502 aa).

It belongs to the GatB/GatE family. GatB subfamily. Heterotrimer of A, B and C subunits.

The catalysed reaction is L-glutamyl-tRNA(Gln) + L-glutamine + ATP + H2O = L-glutaminyl-tRNA(Gln) + L-glutamate + ADP + phosphate + H(+). It catalyses the reaction L-aspartyl-tRNA(Asn) + L-glutamine + ATP + H2O = L-asparaginyl-tRNA(Asn) + L-glutamate + ADP + phosphate + 2 H(+). Its function is as follows. Allows the formation of correctly charged Asn-tRNA(Asn) or Gln-tRNA(Gln) through the transamidation of misacylated Asp-tRNA(Asn) or Glu-tRNA(Gln) in organisms which lack either or both of asparaginyl-tRNA or glutaminyl-tRNA synthetases. The reaction takes place in the presence of glutamine and ATP through an activated phospho-Asp-tRNA(Asn) or phospho-Glu-tRNA(Gln). This chain is Aspartyl/glutamyl-tRNA(Asn/Gln) amidotransferase subunit B, found in Ruegeria sp. (strain TM1040) (Silicibacter sp.).